Reading from the N-terminus, the 467-residue chain is uncharacterized protein (467 aa).

A disordered region spans residues 416–467 (KQQRAQTAVVGTTKELVSKATHMKPPRTPPGEAEHRKRSQSLAICQWNKNSR). Polar residues predominate over residues 455 to 467 (QSLAICQWNKNSR).

This is an uncharacterized protein from Homo sapiens (Human).